An 853-amino-acid chain; its full sequence is A-kinase anchor protein 3 (853 aa).

The segment at 124–137 (VSFYANRLTNLVIA) is PKA-RII subunit binding domain. The disordered stretch occupies residues 188–240 (RNAAPDKAPGSGDRVSGSSQSPPNLKYKSTLKIKESTKERQGPDDKPPSKKSF). Phosphoserine occurs at positions 205 and 208. Over residues 219–235 (KIKESTKERQGPDDKPP) the composition is skewed to basic and acidic residues. At Ser-403 the chain carries Phosphoserine. The residue at position 404 (Tyr-404) is a Phosphotyrosine. Phosphoserine occurs at positions 635 and 636.

The protein belongs to the AKAP110 family. As to quaternary structure, interacts with ROPN1 and ROPN1L. Interacts with QRICH2. Phosphorylated by STK33 during sperm flagella assembly. Phosphorylated on tyrosine residues. As to expression, testis specific; only expressed in spermatids.

The protein localises to the cytoplasmic vesicle. Its subcellular location is the secretory vesicle. The protein resides in the acrosome. It localises to the cell projection. It is found in the cilium. The protein localises to the flagellum. Structural component of sperm fibrous sheath. Required for the formation of the subcellular structure of the sperm flagellum, sperm motility and male fertility. In Homo sapiens (Human), this protein is A-kinase anchor protein 3.